The chain runs to 427 residues: GTPase Obg (427 aa).

The region spanning 1 to 158 (MFVDIAKIYV…LWVILELKVL (158 aa)) is the Obg domain. The region spanning 159-330 (ADVGLIGYPN…VLKRAYELLK (172 aa)) is the OBG-type G domain. Residues 165 to 172 (GYPNVGKS), 190 to 194 (FTTKY), 212 to 215 (DIPG), 282 to 285 (NKMD), and 311 to 313 (SAA) each bind GTP. Mg(2+) is bound by residues S172 and T192. An OCT domain is found at 347 to 427 (FVYYKKKDVK…ILDVEFEYYE (81 aa)).

It belongs to the TRAFAC class OBG-HflX-like GTPase superfamily. OBG GTPase family. Monomer. The cofactor is Mg(2+).

It is found in the cytoplasm. An essential GTPase which binds GTP, GDP and possibly (p)ppGpp with moderate affinity, with high nucleotide exchange rates and a fairly low GTP hydrolysis rate. Plays a role in control of the cell cycle, stress response, ribosome biogenesis and in those bacteria that undergo differentiation, in morphogenesis control. This chain is GTPase Obg, found in Caldicellulosiruptor bescii (strain ATCC BAA-1888 / DSM 6725 / KCTC 15123 / Z-1320) (Anaerocellum thermophilum).